A 115-amino-acid polypeptide reads, in one-letter code: uncharacterized protein (115 aa).

A run of 3 helical transmembrane segments spans residues 10–30 (IAILVFLMVIGFFIFIGSFWL), 47–67 (ASGIILTIFPNINSWFNATVA), and 77–97 (VHFFIPVGFGLLFGLIIAIIV).

The protein resides in the cell membrane. This is an uncharacterized protein from Mycoplasma genitalium (strain ATCC 33530 / DSM 19775 / NCTC 10195 / G37) (Mycoplasmoides genitalium).